The chain runs to 600 residues: Pyranose dehydrogenase 3 (600 aa).

The first 25 residues, 1–25, serve as a signal peptide directing secretion; it reads MLPRVARLNTHLVSLALLGFQITYG. 2 N-linked (GlcNAc...) asparagine glycosylation sites follow: asparagine 99 and asparagine 114. Tele-8alpha-FAD histidine is present on histidine 127. N-linked (GlcNAc...) asparagine glycans are attached at residues asparagine 173, asparagine 199, asparagine 275, asparagine 342, asparagine 399, and asparagine 507. Histidine 535 functions as the Proton acceptor in the catalytic mechanism. The N-linked (GlcNAc...) asparagine glycan is linked to asparagine 546. Residue histidine 579 is part of the active site.

It belongs to the GMC oxidoreductase family. Monomer. FAD serves as cofactor. In terms of processing, N-glycosylated.

The protein resides in the secreted. It carries out the reaction pyranose + acceptor = pyranos-2-ulose + reduced acceptor.. It catalyses the reaction pyranose + acceptor = pyranos-3-ulose + reduced acceptor.. The enzyme catalyses pyranose + acceptor = pyranos-2,3-diulose + reduced acceptor.. The catalysed reaction is a pyranoside + acceptor = a pyranosid-3-ulose + reduced acceptor.. It carries out the reaction a pyranoside + acceptor = a pyranosid-3,4-diulose + reduced acceptor.. Catalyzes the single-oxidation or sequential double oxidation reaction of carbohydrates primarily at carbon-2 and/or carbon-3 with the concomitant reduction of the flavin. The enzyme exhibits a broad sugar substrate specificity, oxidizing different aldopyranoses to the corresponding C-1, C-2, C-3 or C-1,2, C-2,3 and C-3,4 (di)dehydro sugars with substrate-specific regioselectivity. Accepts only a narrow range of electron acceptors such as substituted benzoquinones and complexed metal ions and reacts extremely slowly with O(2) as acceptor. May play a role in the natural recycling of plant matter by oxidizing all major monosaccharides in lignocellulose and by reducing quinone compounds or reactive radical species generated during lignin depolymerization. The polypeptide is Pyranose dehydrogenase 3 (Leucoagaricus meleagris (Western flat-topped agaric)).